We begin with the raw amino-acid sequence, 222 residues long: Beta-amylase (222 aa).

Threonine 36 provides a ligand contact to substrate. Glutamate 74 functions as the Proton acceptor in the catalytic mechanism. Substrate contacts are provided by residues 75 to 76 (NA) and arginine 114.

Belongs to the glycosyl hydrolase 14 family.

It carries out the reaction Hydrolysis of (1-&gt;4)-alpha-D-glucosidic linkages in polysaccharides so as to remove successive maltose units from the non-reducing ends of the chains.. This Secale cereale (Rye) protein is Beta-amylase (BMY1).